The primary structure comprises 491 residues: Cytochrome P450 2F1 (491 aa).

Residue C436 coordinates heme.

The protein belongs to the cytochrome P450 family. The cofactor is heme. In terms of tissue distribution, expressed in lung. Rarely detected in liver and placenta.

It localises to the endoplasmic reticulum membrane. The protein resides in the microsome membrane. The enzyme catalyses an organic molecule + reduced [NADPH--hemoprotein reductase] + O2 = an alcohol + oxidized [NADPH--hemoprotein reductase] + H2O + H(+). Its function is as follows. May be involved in the metabolism of various pneumotoxicants including naphthalene. Is able to dealkylate ethoxycoumarin, propoxycoumarin, and pentoxyresorufin but possesses no activity toward ethoxyresorufin and only trace dearylation activity toward benzyloxyresorufin. Bioactivates 3-methylindole (3MI) by dehydrogenation to the putative electrophile 3-methylene-indolenine. This is Cytochrome P450 2F1 (CYP2F1) from Homo sapiens (Human).